A 571-amino-acid chain; its full sequence is Proline--tRNA ligase (571 aa).

Belongs to the class-II aminoacyl-tRNA synthetase family. ProS type 1 subfamily. In terms of assembly, homodimer.

It is found in the cytoplasm. The enzyme catalyses tRNA(Pro) + L-proline + ATP = L-prolyl-tRNA(Pro) + AMP + diphosphate. Its function is as follows. Catalyzes the attachment of proline to tRNA(Pro) in a two-step reaction: proline is first activated by ATP to form Pro-AMP and then transferred to the acceptor end of tRNA(Pro). As ProRS can inadvertently accommodate and process non-cognate amino acids such as alanine and cysteine, to avoid such errors it has two additional distinct editing activities against alanine. One activity is designated as 'pretransfer' editing and involves the tRNA(Pro)-independent hydrolysis of activated Ala-AMP. The other activity is designated 'posttransfer' editing and involves deacylation of mischarged Ala-tRNA(Pro). The misacylated Cys-tRNA(Pro) is not edited by ProRS. In Buchnera aphidicola subsp. Schizaphis graminum (strain Sg), this protein is Proline--tRNA ligase.